Reading from the N-terminus, the 447-residue chain is Dirigent protein 10 (447 aa).

A signal peptide spans 1–21; the sequence is MAGQKILSLLVIALVVTFAAA. Gly residues predominate over residues 74–85; it reads SGSTGSGLGAGT. Residues 74–123 form a disordered region; that stretch reads SGSTGSGLGAGTGSIPSSGSGPGLLPTASSVPGSLAGGGSGSLPTTGSAT. A compositionally biased stretch (low complexity) spans 86-107; sequence GSIPSSGSGPGLLPTASSVPGS.

This sequence belongs to the plant dirigent protein family. As to quaternary structure, homodimer. In terms of tissue distribution, in roots, mostly detected in root endodermis and quiescent center, and, to a lower extent, in root stele and cortex. Expressed in root vascular cylinder, flowers, siliques, cotyledon and leaf veins, and leaf margins. Present in the basal region of rosette leaf trichomes and in developing xylem.

The protein localises to the secreted. Its subcellular location is the extracellular space. It is found in the apoplast. Dirigent proteins impart stereoselectivity on the phenoxy radical-coupling reaction, yielding optically active lignans from two molecules of coniferyl alcohol in the biosynthesis of lignans, flavonolignans, and alkaloids and thus plays a central role in plant secondary metabolism. Regulates suberin accumulation in roots. The protein is Dirigent protein 10 (DIR10) of Arabidopsis thaliana (Mouse-ear cress).